Consider the following 326-residue polypeptide: CRISPR-associated endonuclease Cas1 (326 aa).

Mn(2+)-binding residues include Glu191, His255, and Asp269.

It belongs to the CRISPR-associated endonuclease Cas1 family. Homodimer. Interacts with Cas3, in the absence of crRNA. The cofactor is Mg(2+). It depends on Mn(2+) as a cofactor.

Functionally, CRISPR (clustered regularly interspaced short palindromic repeat), is an adaptive immune system that provides protection against mobile genetic elements (viruses, transposable elements and conjugative plasmids). CRISPR clusters contain sequences complementary to antecedent mobile elements and target invading nucleic acids. CRISPR clusters are transcribed and processed into CRISPR RNA (crRNA). Acts as a dsDNA endonuclease. Involved in the integration of spacer DNA into the CRISPR cassette. This chain is CRISPR-associated endonuclease Cas1, found in Pectobacterium atrosepticum (strain SCRI 1043 / ATCC BAA-672) (Erwinia carotovora subsp. atroseptica).